The sequence spans 246 residues: MNVLDNSVIIKGSKNGITVFLDEEMPFEELLENVSDKFKNASKFFNNATMAISFDGRNLSAEEEKRILNVISDVSELNIVCVLDENNDIKSVYEEAVKKAMNSFNISHQPERQKITDPKTTCMFYKGTLRSGQVFEADGSVVVLGDVNPGGKVVAKGSVIVLGSLKGNIFAGVDGNENAFVVALEMSPMQIKIGDIIARSSDSGVNKISKGKNKSKILEPKIAYVYDQNIYVEDLEQNALDDISLD.

The protein belongs to the MinC family. Interacts with MinD and FtsZ.

Cell division inhibitor that blocks the formation of polar Z ring septums. Rapidly oscillates between the poles of the cell to destabilize FtsZ filaments that have formed before they mature into polar Z rings. Prevents FtsZ polymerization. This chain is Probable septum site-determining protein MinC, found in Lachnospira eligens (strain ATCC 27750 / DSM 3376 / VPI C15-48 / C15-B4) (Eubacterium eligens).